Reading from the N-terminus, the 126-residue chain is C-X-C motif chemokine 9 (126 aa).

An N-terminal signal peptide occupies residues 1–21 (MKSAVLFLLGIIFLEQCGVRG). Intrachain disulfides connect Cys30–Cys57 and Cys32–Cys73. N-linked (GlcNAc...) asparagine glycosylation is present at Asn58. Positions 91-126 (KISQKKKQKRGKKHQKNMKNRKPKTPQSRRRSRKTT) are disordered. Residues 93–126 (SQKKKQKRGKKHQKNMKNRKPKTPQSRRRSRKTT) show a composition bias toward basic residues.

Belongs to the intercrine alpha (chemokine CxC) family.

Its subcellular location is the secreted. Its function is as follows. May be a cytokine that affects the growth, movement, or activation state of cells that participate in immune and inflammatory response. The sequence is that of C-X-C motif chemokine 9 (Cxcl9) from Mus musculus (Mouse).